A 470-amino-acid polypeptide reads, in one-letter code: Poly(A) polymerase catalytic subunit (470 aa).

Catalysis depends on residues Asp-192 and Asp-194.

It belongs to the poxviridae poly(A) polymerase catalytic subunit family. In terms of assembly, heterodimer of a large (catalytic) subunit and a small (regulatory) subunit.

It catalyses the reaction RNA(n) + ATP = RNA(n)-3'-adenine ribonucleotide + diphosphate. Polymerase that creates the 3'-poly(A) tail of mRNA's. This chain is Poly(A) polymerase catalytic subunit (PAPL), found in Homo sapiens (Human).